The primary structure comprises 465 residues: Phenylalanine--tRNA ligase alpha subunit (465 aa).

Residues T309, 348-350 (QLD), and F388 each bind L-phenylalanine. Residue E390 participates in Mg(2+) binding.

This sequence belongs to the class-II aminoacyl-tRNA synthetase family. Phe-tRNA synthetase alpha subunit type 2 subfamily. In terms of assembly, tetramer of two alpha and two beta subunits. Mg(2+) is required as a cofactor.

It is found in the cytoplasm. The catalysed reaction is tRNA(Phe) + L-phenylalanine + ATP = L-phenylalanyl-tRNA(Phe) + AMP + diphosphate + H(+). The sequence is that of Phenylalanine--tRNA ligase alpha subunit from Sulfolobus acidocaldarius (strain ATCC 33909 / DSM 639 / JCM 8929 / NBRC 15157 / NCIMB 11770).